Consider the following 691-residue polypeptide: MTRKFPLEQTRNIGIMAHIDAGKTTTTERILFYTGRVHKLGETHDGASTMDFMDQEQERGITITSAATTCQWRDTRVNIIDTPGHVDFTVEVERSLRVLDGAIGVFCAKGGVEPQSETVWHQADRYHVPRIAYINKMDIMGADFYNVVDMMNERLQANPVPIQLPIGKEDDFQGIVDLIKNTAVIYKDDLGTEWEEVEIPEDMQELAEEYRDKMLEMAAEYDEELMMKYLEGEEITSEEIRLALREGCLKTELTPVLCGSSYKNKGVQMLLNAVIDYLPAPTDVPPIEGVVPGKEDEEEKEQRVSSDDEPFSALAFKIVTDPYVGKLCFFRVYSGKIEAGSYVYNPVKGKKERVGRILQMHANHREERNVVYTGDIAAAVGLKNTSTGETLCSPEKPIVLESMQFPEPVISVAIEPKTRADQEKMATSLQKLSEEDPTFQTHTDDETGQTIIKGMGELHLEVIVDRLLREFKVEANVGKPQVAYKETIKAPTKSEGKFIRQSGGRGQYGHVLIEMEPLERGAGYEFEDKIVGGVIPKEYIPAVDNGIQEAMQNGVLAGYPMVDVKITLYDGSYHEVDSNESAFKIAGSMAFKDGSKKASPVILEPIMKVEIVVPEEYMGDVMGDVNSRRGRIEGMEERSGSRLIRSYVPLAEMFGYATQLRSTTQGRGTYTMEFSHYDEVPDSIAKELMDV.

One can recognise a tr-type G domain in the interval 8-282; the sequence is EQTRNIGIMA…AVIDYLPAPT (275 aa). GTP contacts are provided by residues 17–24, 81–85, and 135–138; these read AHIDAGKT, DTPGH, and NKMD.

The protein belongs to the TRAFAC class translation factor GTPase superfamily. Classic translation factor GTPase family. EF-G/EF-2 subfamily.

It is found in the cytoplasm. Its function is as follows. Catalyzes the GTP-dependent ribosomal translocation step during translation elongation. During this step, the ribosome changes from the pre-translocational (PRE) to the post-translocational (POST) state as the newly formed A-site-bound peptidyl-tRNA and P-site-bound deacylated tRNA move to the P and E sites, respectively. Catalyzes the coordinated movement of the two tRNA molecules, the mRNA and conformational changes in the ribosome. The polypeptide is Elongation factor G (Natranaerobius thermophilus (strain ATCC BAA-1301 / DSM 18059 / JW/NM-WN-LF)).